The primary structure comprises 626 residues: Leucine aminopeptidase 2-1 (626 aa).

Substrate contacts are provided by residues 134-136 (QCQ) and 259-264 (PYGGME). H288 contacts Zn(2+). E289 acts as the Proton acceptor in catalysis. Positions 292 and 311 each coordinate Zn(2+). The active-site Proton donor is the Y389.

Belongs to the peptidase M1 family. It depends on Zn(2+) as a cofactor.

The protein resides in the cytoplasm. It is found in the nucleus. The catalysed reaction is an epoxide + H2O = an ethanediol. In terms of biological role, aminopeptidase that preferentially cleaves di- and tripeptides. Also has low epoxide hydrolase activity (in vitro). Can hydrolyze the epoxide leukotriene LTA(4) but it forms preferentially 5,6-dihydroxy-7,9,11,14-eicosatetraenoic acid rather than the cytokine leukotriene B(4) as the product compared to the homologous mammalian enzyme (in vitro). The sequence is that of Leucine aminopeptidase 2-1 (LKA4) from Scheffersomyces stipitis (strain ATCC 58785 / CBS 6054 / NBRC 10063 / NRRL Y-11545) (Yeast).